Reading from the N-terminus, the 239-residue chain is Cytochrome b6-f complex iron-sulfur subunit 1, cyanelle (239 aa).

A cyanelle-targeting transit peptide spans 1–60 (MAFTTTAVVAPRGAKITGQSSTCAIQNGKTVAVGTSKQVGSFKPVFAAAKPAKETTFSVS). The chain crosses the membrane as a helical span at residues 81–101 (LLGAIAGPVAGAGGPFVSFLV). Positions 125-221 (VSSWLETHKP…VSVLEDGVVA (97 aa)) constitute a Rieske domain. [2Fe-2S] cluster contacts are provided by Cys167, His169, Cys185, and His188. Cys172 and Cys187 are joined by a disulfide.

This sequence belongs to the Rieske iron-sulfur protein family. As to quaternary structure, the 4 large subunits of the cytochrome b6-f complex are cytochrome b6, subunit IV (17 kDa polypeptide, petD), cytochrome f and the Rieske protein, while the 4 small subunits are petG, petL, petM and petN. The complex functions as a dimer. Requires [2Fe-2S] cluster as cofactor.

The protein resides in the plastid. It localises to the cyanelle thylakoid membrane. It catalyses the reaction 2 oxidized [plastocyanin] + a plastoquinol + 2 H(+)(in) = 2 reduced [plastocyanin] + a plastoquinone + 4 H(+)(out). Its function is as follows. Component of the cytochrome b6-f complex, which mediates electron transfer between photosystem II (PSII) and photosystem I (PSI), cyclic electron flow around PSI, and state transitions. The chain is Cytochrome b6-f complex iron-sulfur subunit 1, cyanelle (petC-1) from Cyanophora paradoxa.